Consider the following 503-residue polypeptide: tRNA-2-methylthio-N(6)-dimethylallyladenosine synthase (503 aa).

The 117-residue stretch at 5–121 (RSYEIRTFGC…LPVLLERARH (117 aa)) folds into the MTTase N-terminal domain. [4Fe-4S] cluster contacts are provided by Cys-14, Cys-50, Cys-84, Cys-158, Cys-162, and Cys-165. The Radical SAM core domain maps to 144–380 (RESAYAGWVS…IALQEEISLA (237 aa)). The TRAM domain occupies 383 to 453 (RELIGTEVEL…PHHLIADAPV (71 aa)).

The protein belongs to the methylthiotransferase family. MiaB subfamily. As to quaternary structure, monomer. Requires [4Fe-4S] cluster as cofactor.

It is found in the cytoplasm. The enzyme catalyses N(6)-dimethylallyladenosine(37) in tRNA + (sulfur carrier)-SH + AH2 + 2 S-adenosyl-L-methionine = 2-methylsulfanyl-N(6)-dimethylallyladenosine(37) in tRNA + (sulfur carrier)-H + 5'-deoxyadenosine + L-methionine + A + S-adenosyl-L-homocysteine + 2 H(+). Catalyzes the methylthiolation of N6-(dimethylallyl)adenosine (i(6)A), leading to the formation of 2-methylthio-N6-(dimethylallyl)adenosine (ms(2)i(6)A) at position 37 in tRNAs that read codons beginning with uridine. This chain is tRNA-2-methylthio-N(6)-dimethylallyladenosine synthase, found in Nocardia farcinica (strain IFM 10152).